The primary structure comprises 436 residues: 3-ketoacyl-CoA thiolase (436 aa).

The Acyl-thioester intermediate role is filled by Cys-99. Residues His-392 and Cys-422 each act as proton acceptor in the active site.

This sequence belongs to the thiolase-like superfamily. Thiolase family. As to quaternary structure, heterotetramer of two alpha chains (FadJ) and two beta chains (FadI).

The protein resides in the cytoplasm. It carries out the reaction an acyl-CoA + acetyl-CoA = a 3-oxoacyl-CoA + CoA. Its pathway is lipid metabolism; fatty acid beta-oxidation. Functionally, catalyzes the final step of fatty acid oxidation in which acetyl-CoA is released and the CoA ester of a fatty acid two carbons shorter is formed. The sequence is that of 3-ketoacyl-CoA thiolase from Shewanella baltica (strain OS155 / ATCC BAA-1091).